Reading from the N-terminus, the 976-residue chain is uncharacterized protein (976 aa).

This is an uncharacterized protein from Acanthamoeba polyphaga (Amoeba).